Consider the following 418-residue polypeptide: tRNA-2-methylthio-N(6)-dimethylallyladenosine synthase (418 aa).

Residues 2–118 (PGYYLWTIGC…WREIPEGFIL (117 aa)) enclose the MTTase N-terminal domain. Positions 11, 47, 81, 134, 138, and 141 each coordinate [4Fe-4S] cluster. The 232-residue stretch at 120–351 (LRPPVSANVT…EDLQKETVGK (232 aa)) folds into the Radical SAM core domain. Residues 346-414 (KETVGKANAA…PWSLQAKLVN (69 aa)) form the TRAM domain.

It belongs to the methylthiotransferase family. MiaB subfamily. In terms of assembly, monomer. The cofactor is [4Fe-4S] cluster.

It localises to the cytoplasm. The catalysed reaction is N(6)-dimethylallyladenosine(37) in tRNA + (sulfur carrier)-SH + AH2 + 2 S-adenosyl-L-methionine = 2-methylsulfanyl-N(6)-dimethylallyladenosine(37) in tRNA + (sulfur carrier)-H + 5'-deoxyadenosine + L-methionine + A + S-adenosyl-L-homocysteine + 2 H(+). Its function is as follows. Catalyzes the methylthiolation of N6-(dimethylallyl)adenosine (i(6)A), leading to the formation of 2-methylthio-N6-(dimethylallyl)adenosine (ms(2)i(6)A) at position 37 in tRNAs that read codons beginning with uridine. This is tRNA-2-methylthio-N(6)-dimethylallyladenosine synthase from Dehalococcoides mccartyi (strain ATCC BAA-2100 / JCM 16839 / KCTC 5957 / BAV1).